Consider the following 510-residue polypeptide: Pectinesterase 2 (510 aa).

The signal sequence occupies residues 1-19; that stretch reads MALRILITVSLVLFSLSHT. N-linked (GlcNAc...) asparagine glycosylation is found at asparagine 110 and asparagine 158. Substrate-binding residues include threonine 275 and glutamine 305. The active-site Proton donor is aspartate 328. Cysteine 342 and cysteine 362 are oxidised to a cystine. Aspartate 349 acts as the Nucleophile in catalysis. N-linked (GlcNAc...) asparagine glycosylation is found at asparagine 371 and asparagine 385. Substrate-binding residues include arginine 416 and tryptophan 418.

This sequence in the N-terminal section; belongs to the PMEI family. It in the C-terminal section; belongs to the pectinesterase family. In terms of tissue distribution, expressed at low levels in young leaves, young bark, young fruit, mature fruit vesicles, shoots and flower buds, young bark and juice vesicles. In both leaf and fruit abscission zones, and mature leaves, expression was initially undetectable but increased markedly following ethylene treatment.

It localises to the secreted. Its subcellular location is the cell wall. The catalysed reaction is [(1-&gt;4)-alpha-D-galacturonosyl methyl ester](n) + n H2O = [(1-&gt;4)-alpha-D-galacturonosyl](n) + n methanol + n H(+). It functions in the pathway glycan metabolism; pectin degradation; 2-dehydro-3-deoxy-D-gluconate from pectin: step 1/5. Its function is as follows. Acts in the modification of cell walls via demethylesterification of cell wall pectin. This is Pectinesterase 2 (PECS-2.1) from Citrus sinensis (Sweet orange).